The following is a 1197-amino-acid chain: DNA-directed RNA polymerase subunit beta (1197 aa).

Residues 1172-1185 (KEQEEKKAQQEAEK) are compositionally biased toward basic and acidic residues. Residues 1172 to 1197 (KEQEEKKAQQEAEKAQAASAEDPSAE) form a disordered region. A compositionally biased stretch (low complexity) spans 1186-1197 (AQAASAEDPSAE).

It belongs to the RNA polymerase beta chain family. In terms of assembly, the RNAP catalytic core consists of 2 alpha, 1 beta, 1 beta' and 1 omega subunit. When a sigma factor is associated with the core the holoenzyme is formed, which can initiate transcription.

It catalyses the reaction RNA(n) + a ribonucleoside 5'-triphosphate = RNA(n+1) + diphosphate. In terms of biological role, DNA-dependent RNA polymerase catalyzes the transcription of DNA into RNA using the four ribonucleoside triphosphates as substrates. The sequence is that of DNA-directed RNA polymerase subunit beta from Latilactobacillus sakei subsp. sakei (strain 23K) (Lactobacillus sakei subsp. sakei).